The following is a 1500-amino-acid chain: Carbamoyl-phosphate synthase [ammonia], mitochondrial (1500 aa).

The transit peptide at 1 to 38 (MTRILTACKVVKTLKSGFGFANVTTKRQWDFSRPGIRL) directs the protein to the mitochondrion. The segment at 39-218 (LSVKAKTAHI…VKVFGKGNPT (180 aa)) is anthranilate phosphoribosyltransferase homolog. Lys-44, Lys-55, Lys-57, and Lys-119 each carry N6-acetyllysine; alternate. Residues Lys-44, Lys-55, Lys-57, and Lys-119 each carry the N6-succinyllysine; alternate modification. Lys-55 bears the N6-glutaryllysine; alternate mark. Ser-148 carries the post-translational modification Phosphoserine. 2 positions are modified to N6-acetyllysine; alternate: Lys-157 and Lys-171. N6-succinyllysine; alternate is present on Lys-157. The residue at position 171 (Lys-171) is an N6-glutaryllysine; alternate. Lys-176 is modified (N6-glutaryllysine). At Lys-182 the chain carries N6-acetyllysine. Position 189 is a phosphoserine (Ser-189). Lys-197 carries the N6-acetyllysine modification. 5 positions are modified to N6-acetyllysine; alternate: Lys-207, Lys-210, Lys-214, Lys-219, and Lys-228. Lys-207 carries the post-translational modification N6-succinyllysine; alternate. 5 positions are modified to N6-glutaryllysine; alternate: Lys-207, Lys-210, Lys-214, Lys-219, and Lys-228. Residue Lys-214 is modified to N6-succinyllysine; alternate. The Glutamine amidotransferase type-1 domain occupies 219-404 (KVVAVDCGIK…FSLIKKGKGT (186 aa)). Residue Lys-237 is modified to N6-glutaryllysine. Residue Lys-279 is modified to N6-acetyllysine. N6-acetyllysine; alternate occurs at positions 280, 287, 307, and 310. Position 280 is an N6-glutaryllysine; alternate (Lys-280). Lys-287 and Lys-307 each carry N6-succinyllysine; alternate. N6-glutaryllysine; alternate is present on residues Lys-307 and Lys-310. Position 400 is an N6-succinyllysine (Lys-400). N6-succinyllysine; alternate is present on residues Lys-402 and Lys-412. N6-glutaryllysine; alternate is present on residues Lys-402, Lys-412, Lys-453, and Lys-458. N6-acetyllysine; alternate is present on residues Lys-412, Lys-453, Lys-458, Lys-522, Lys-527, and Lys-532. Residues Lys-458, Lys-522, and Lys-527 each carry the N6-succinyllysine; alternate modification. Residues Lys-527 and Lys-532 each carry the N6-glutaryllysine; alternate modification. Phosphoserine; alternate is present on Ser-537. An O-linked (GlcNAc) serine; alternate glycan is attached at Ser-537. Ser-540 carries the phosphoserine modification. The ATP-grasp 1 domain occupies 551–743 (SDKLNEINEK…LAFIAAKIAL (193 aa)). Residues Lys-553 and Lys-560 each carry the N6-acetyllysine; alternate modification. 2 positions are modified to N6-succinyllysine; alternate: Lys-553 and Lys-560. Lys-553 carries the N6-glutaryllysine; alternate modification. A Phosphoserine modification is found at Ser-569. Lys-575, Lys-603, and Lys-612 each carry N6-acetyllysine; alternate. An N6-succinyllysine; alternate mark is found at Lys-575, Lys-603, and Lys-612. N6-acetyllysine is present on Lys-630. At Lys-728 the chain carries N6-glutaryllysine. 12 positions are modified to N6-acetyllysine; alternate: Lys-751, Lys-757, Lys-772, Lys-793, Lys-811, Lys-831, Lys-840, Lys-841, Lys-856, Lys-875, Lys-889, and Lys-892. N6-succinyllysine; alternate is present on residues Lys-751 and Lys-757. 4 positions are modified to N6-glutaryllysine; alternate: Lys-757, Lys-772, Lys-793, and Lys-811. Lys-793 bears the N6-succinyllysine; alternate mark. Residues Lys-831 and Lys-840 each carry the N6-succinyllysine; alternate modification. N6-glutaryllysine; alternate is present on residues Lys-841, Lys-856, Lys-875, Lys-889, and Lys-892. Residues Lys-875, Lys-889, and Lys-892 each carry the N6-succinyllysine; alternate modification. Phosphoserine is present on residues Ser-896 and Ser-898. An N6-acetyllysine; alternate mark is found at Lys-908, Lys-915, and Lys-919. 3 positions are modified to N6-glutaryllysine; alternate: Lys-908, Lys-915, and Lys-919. An N6-succinyllysine; alternate mark is found at Lys-915 and Lys-919. N6-acetyllysine is present on Lys-935. The residue at position 1036 (Ser-1036) is a Phosphoserine. Lys-1074 is subject to N6-acetyllysine; alternate. At Lys-1074 the chain carries N6-succinyllysine; alternate. Lys-1074 carries the N6-glutaryllysine; alternate modification. Phosphoserine occurs at positions 1079, 1090, and 1093. Residues 1093-1284 (SAVLDELKVA…FIDVATKVMI (192 aa)) enclose the ATP-grasp 2 domain. Lys-1100 is modified (N6-acetyllysine; alternate). Lys-1100 is modified (N6-succinyllysine; alternate). Lys-1149 carries the post-translational modification N6-succinyllysine. 2 positions are modified to N6-acetyllysine; alternate: Lys-1168 and Lys-1183. An N6-succinyllysine; alternate mark is found at Lys-1168 and Lys-1183. N6-glutaryllysine; alternate is present on residues Lys-1168 and Lys-1183. Residue Ser-1203 is modified to Phosphoserine. Lys-1222 bears the N6-acetyllysine mark. Lys-1224 carries the N6-glutaryllysine modification. N6-acetyllysine; alternate occurs at positions 1232, 1269, and 1291. 3 positions are modified to N6-succinyllysine; alternate: Lys-1232, Lys-1269, and Lys-1291. Ser-1331 carries O-linked (GlcNAc) serine glycosylation. A glycan (O-linked (GlcNAc) threonine) is linked at Thr-1332. An MGS-like domain is found at 1355–1500 (FKIPQKGILI…YRQYSAGKAA (146 aa)). An N6-acetyllysine; alternate modification is found at Lys-1356. An N6-succinyllysine; alternate mark is found at Lys-1356 and Lys-1360. N6-glutaryllysine; alternate occurs at positions 1356 and 1360. The N-acetyl-L-glutamate site is built by Thr-1391, Thr-1394, and Trp-1410. Ser-1419 and Ser-1431 each carry phosphoserine. N-acetyl-L-glutamate contacts are provided by Asn-1437 and Asn-1440. N6-acetyllysine; alternate is present on Lys-1444. Position 1444 is an N6-succinyllysine; alternate (Lys-1444). Asn-1449 provides a ligand contact to N-acetyl-L-glutamate. Lys-1471, Lys-1479, and Lys-1486 each carry N6-acetyllysine; alternate. 3 positions are modified to N6-succinyllysine; alternate: Lys-1471, Lys-1479, and Lys-1486. 2 positions are modified to N6-glutaryllysine; alternate: Lys-1479 and Lys-1486.

In terms of assembly, can form homooligomers (monomers as predominant form and dimers). As to quaternary structure, (Microbial infection) Interacts with P.berghei (ANKA strain) phospholipid scramblase PLSCR; the interaction is involved in the interaction between parasite sporozoites and host hepatocytes. Undergoes proteolytic cleavage in the C-terminal region corresponding to the loss of approximately 12 AA residues from the C-terminus. In terms of processing, acetylation of Lys-287, Lys-603, Lys-841 and Lys-1291 is observed in liver mitochondria from fasted mice but not from fed mice. Post-translationally, succinylated at Lys-44, Lys-287 and Lys-1291. Desuccinylated at Lys-1291 by SIRT5, leading to activation. Glutarylated. Glutarylation levels increase during fasting. Deglutarylated by SIRT5 at Lys-55, Lys-219, Lys-412, Lys-889, Lys-892, Lys-915, Lys-1360 and Lys-1486, leading to activation. As to expression, expressed in hepatocytes (at protein level).

The protein resides in the mitochondrion. It localises to the nucleus. Its subcellular location is the nucleolus. The protein localises to the cell membrane. The catalysed reaction is hydrogencarbonate + NH4(+) + 2 ATP = carbamoyl phosphate + 2 ADP + phosphate + 2 H(+). Requires N-acetyl-L-glutamate (NAG) as an allosteric activator. Involved in the urea cycle of ureotelic animals where the enzyme plays an important role in removing excess ammonia from the cell. This chain is Carbamoyl-phosphate synthase [ammonia], mitochondrial (Cps1), found in Mus musculus (Mouse).